The chain runs to 116 residues: Ribonuclease P protein component 2 (116 aa).

This sequence belongs to the eukaryotic/archaeal RNase P protein component 2 family. Consists of a catalytic RNA component and at least 4-5 protein subunits.

The protein resides in the cytoplasm. The catalysed reaction is Endonucleolytic cleavage of RNA, removing 5'-extranucleotides from tRNA precursor.. Part of ribonuclease P, a protein complex that generates mature tRNA molecules by cleaving their 5'-ends. In Methanosarcina mazei (strain ATCC BAA-159 / DSM 3647 / Goe1 / Go1 / JCM 11833 / OCM 88) (Methanosarcina frisia), this protein is Ribonuclease P protein component 2.